A 377-amino-acid polypeptide reads, in one-letter code: Erythronate-4-phosphate dehydrogenase (377 aa).

2 residues coordinate substrate: serine 45 and threonine 67. Residues 127 to 128 (QV), aspartate 147, and threonine 176 contribute to the NAD(+) site. Residue arginine 209 is part of the active site. Aspartate 233 is a binding site for NAD(+). Glutamate 238 is a catalytic residue. The active-site Proton donor is histidine 255. Residue glycine 258 coordinates NAD(+). Residue tyrosine 259 participates in substrate binding.

It belongs to the D-isomer specific 2-hydroxyacid dehydrogenase family. PdxB subfamily. Homodimer.

The protein resides in the cytoplasm. It catalyses the reaction 4-phospho-D-erythronate + NAD(+) = (R)-3-hydroxy-2-oxo-4-phosphooxybutanoate + NADH + H(+). Its pathway is cofactor biosynthesis; pyridoxine 5'-phosphate biosynthesis; pyridoxine 5'-phosphate from D-erythrose 4-phosphate: step 2/5. In terms of biological role, catalyzes the oxidation of erythronate-4-phosphate to 3-hydroxy-2-oxo-4-phosphonooxybutanoate. The chain is Erythronate-4-phosphate dehydrogenase from Vibrio atlanticus (strain LGP32) (Vibrio splendidus (strain Mel32)).